Consider the following 464-residue polypeptide: Nuclear distribution protein nudF 2 (464 aa).

Positions 9-41 constitute a LisH domain; sequence QAAELNKSIIAYLSAHGLAETLAAFRKESDFPD. A coiled-coil region spans residues 63–88; it reads NSTLMKKLLALESHNKALRNELNSTR. WD repeat units lie at residues 112-151, 154-195, 199-238, 241-280, 285-343, 344-383, 388-424, and 426-464; these read SHRDSINCIAFHPKYSLIASGSGDLTIRIWDWEDSTLERT, GHTM…KNVK, GHDHIVSAVRFIPSGNLLASASRDMKVILWNVINGYRVKT, DHTGWVRDISPSFDGQFLLSTGDDMTVRLWEISASQPICK, GHEN…MTLT, GHASWVRAIAFHPGGKYLLSVSDDKTMRCWDLSQQGRCVK, AHDGFITCLKWVPGIAKDTRNGTMTISYQRKGSAELP, and SKLDEVGQPGVQIRCVLATGGEDQKIRVFALQANDRSHK.

This sequence belongs to the WD repeat LIS1/nudF family. Self-associates. Interacts with nudE and dynein.

The protein resides in the cytoplasm. The protein localises to the cytoskeleton. It is found in the spindle pole. Positively regulates the activity of the minus-end directed microtubule motor protein dynein. May enhance dynein-mediated microtubule sliding by targeting dynein to the microtubule plus end. Required for nuclear migration during vegetative growth as well as development. Required for retrograde early endosome (EE) transport from the hyphal tip. Required for localization of dynein to the mitotic spindle poles. Recruits additional proteins to the dynein complex at SPBs. This chain is Nuclear distribution protein nudF 2, found in Penicillium rubens (strain ATCC 28089 / DSM 1075 / NRRL 1951 / Wisconsin 54-1255) (Penicillium chrysogenum).